Consider the following 206-residue polypeptide: Large ribosomal subunit protein uL4 (206 aa).

Residues 43-78 are disordered; the sequence is ARSGNRKQKDREEVKHTTKKPWRQKGTGRARAGMSS. Residues 49–58 are compositionally biased toward basic and acidic residues; sequence KQKDREEVKH. The segment covering 59–70 has biased composition (basic residues); that stretch reads TTKKPWRQKGTG.

This sequence belongs to the universal ribosomal protein uL4 family. In terms of assembly, part of the 50S ribosomal subunit.

In terms of biological role, one of the primary rRNA binding proteins, this protein initially binds near the 5'-end of the 23S rRNA. It is important during the early stages of 50S assembly. It makes multiple contacts with different domains of the 23S rRNA in the assembled 50S subunit and ribosome. Forms part of the polypeptide exit tunnel. This Cupriavidus metallidurans (strain ATCC 43123 / DSM 2839 / NBRC 102507 / CH34) (Ralstonia metallidurans) protein is Large ribosomal subunit protein uL4.